The following is a 175-amino-acid chain: Cell number regulator 9 (175 aa).

2 helical membrane-spanning segments follow: residues 53-73 and 80-100; these read GLCC…AEIV and CGVA…HWIY.

It belongs to the cornifelin family. In terms of tissue distribution, expressed in roots, coleoptiles, leaves and stalks.

It is found in the membrane. This is Cell number regulator 9 (CNR9) from Zea mays (Maize).